The chain runs to 336 residues: MKDRYILAFETSCDETSVAVLKNDDELLSNVIASQIESHKRFGGVVPEVASRHHVEVITACIEEALAEAGITEEDVTAVAVTYGPGLVGALLVGLSAAKTFAWAHGLPLIPVNHMAGHLMAAQSVEPLEFPLLALLVSGGHTELVYVSEAGDYKIVGETRDDAVGEAYDKVGRVMGLTYPAGREIDELAHQGQDIYDFPRAMIKEDNLEFSFSGLKSAFINLHHNAEQKGESLSTEDLCASFQAAVMDILMAKTKKALEEYPVKTLVVAGGVAANKGLRERLAAEITDVKVIIPPLRLCGDNAGMIAYASVSEWNKENFAGWDLNAKPSLAFDTME.

His-114 and His-118 together coordinate Fe cation. Substrate contacts are provided by residues 136–140, Asp-169, Gly-182, Asp-186, and Asn-275; that span reads LVSGG. Residue Asp-301 participates in Fe cation binding.

This sequence belongs to the KAE1 / TsaD family. Fe(2+) serves as cofactor.

Its subcellular location is the cytoplasm. The enzyme catalyses L-threonylcarbamoyladenylate + adenosine(37) in tRNA = N(6)-L-threonylcarbamoyladenosine(37) in tRNA + AMP + H(+). Functionally, required for the formation of a threonylcarbamoyl group on adenosine at position 37 (t(6)A37) in tRNAs that read codons beginning with adenine. Is involved in the transfer of the threonylcarbamoyl moiety of threonylcarbamoyl-AMP (TC-AMP) to the N6 group of A37, together with TsaE and TsaB. TsaD likely plays a direct catalytic role in this reaction. The polypeptide is tRNA N6-adenosine threonylcarbamoyltransferase (Streptococcus pneumoniae (strain Hungary19A-6)).